Consider the following 314-residue polypeptide: Homoserine O-acetyltransferase (314 aa).

Residue cysteine 142 is the Acyl-thioester intermediate of the active site. Lysine 163 and serine 192 together coordinate substrate. Catalysis depends on histidine 235, which acts as the Proton acceptor. The active site involves glutamate 237. Arginine 249 serves as a coordination point for substrate.

It belongs to the MetA family.

Its subcellular location is the cytoplasm. It catalyses the reaction L-homoserine + acetyl-CoA = O-acetyl-L-homoserine + CoA. It participates in amino-acid biosynthesis; L-methionine biosynthesis via de novo pathway; O-acetyl-L-homoserine from L-homoserine: step 1/1. Its function is as follows. Transfers an acetyl group from acetyl-CoA to L-homoserine, forming acetyl-L-homoserine. This is Homoserine O-acetyltransferase from Streptococcus pneumoniae (strain JJA).